Reading from the N-terminus, the 373-residue chain is NADPH-dependent 3-keto-steroid reductase HSD3B3 (373 aa).

Residues 10–15, tyrosine 155, and lysine 159 each bind NADP(+); that span reads GAGGFL. Lysine 159 acts as the Proton donor in catalysis. The chain crosses the membrane as a helical span at residues 288-308; sequence VALLYWFGFLLETVSFLLRPV.

The protein belongs to the 3-beta-HSD family. High levels in adrenal gland, kidney and male liver (at protein level). Low levels in female liver (at protein level). Expressed in ovaries (at protein level).

It is found in the endoplasmic reticulum membrane. Its subcellular location is the mitochondrion membrane. It carries out the reaction a 3beta-hydroxysteroid + NADP(+) = a 3-oxosteroid + NADPH + H(+). The enzyme catalyses 5alpha-androstane-3beta,17beta-diol + NADP(+) = 17beta-hydroxy-5alpha-androstan-3-one + NADPH + H(+). It participates in steroid metabolism. Functionally, responsible for the reduction of the oxo group on the C-3 of 5alpha-androstane steroids. Catalyzes the conversion of dihydrotestosterone to its inactive form 5alpha-androstanediol, that does not bind androgen receptor/AR. Does not function as an isomerase. The chain is NADPH-dependent 3-keto-steroid reductase HSD3B3 (HSD3B3) from Mesocricetus auratus (Golden hamster).